The sequence spans 481 residues: Ankyrin repeat, SAM and basic leucine zipper domain-containing protein 1 (481 aa).

Over residues Met1–Glu16 the composition is skewed to gly residues. The tract at residues Met1–Asp23 is disordered. Phosphoserine is present on residues Ser17, Ser18, and Ser20. 6 ANK repeats span residues Glu45–Ser74, Tyr78–Phe107, Asp110–Val144, Arg148–Thr177, Asn181–Leu210, and Asp214–Gly243. Residues Ser272–Glu334 form the SAM domain.

Interacts with DDX4, PIWIL1, RANBP9 and TDRD1.

It localises to the cytoplasm. Its function is as follows. Plays a central role during spermatogenesis by repressing transposable elements and preventing their mobilization, which is essential for the germline integrity. Acts via the piRNA metabolic process, which mediates the repression of transposable elements during meiosis by forming complexes composed of piRNAs and Piwi proteins and governs the methylation and subsequent repression of transposons. Its association with pi-bodies suggests a participation in the primary piRNAs metabolic process. Required prior to the pachytene stage to facilitate the production of multiple types of piRNAs, including those associated with repeats involved in the regulation of retrotransposons. May act by mediating protein-protein interactions during germ cell maturation. The protein is Ankyrin repeat, SAM and basic leucine zipper domain-containing protein 1 (ASZ1) of Microcebus murinus (Gray mouse lemur).